The primary structure comprises 447 residues: MTQRKYFGTDGIRGRVGDSPITPEFMLHLGWAAGQAFKRAGQRNSVLIGKDTRLSGYMFESALEAGLAAAGVDVKLLGPMPTPAIAYLTRTFRASAGIVISASHNPHHDNGIKFFSSAGTKLDDALEAEIERWLDQPIEVCEPEELGKASRVDDAPGRYVEFCKSTVPNEFTLDGMHLVLDCAHGATYHVAPKVFRELGAKVTVIGAEPDGLNINLNVGSTHLGALKQAVAEKKADLGIAFDGDGDRVLMVDRDGSEVDGDELLYILASQRQAEGRLNGGVVGTLMTNLGVELALREIGVEFERAKVGDRYVMERLLANNWLIGGEGSGHMVIRDCTTTGDGIVSALQVLLAVRKSGKTMGELRAGMSKLPQKMINVRVAERFDPLGRADIVEAMARAEASLGDAGRILLRASGTEPLIRVMAEGQSADDITRVVEELALVVERSTP.

Residue serine 103 is the Phosphoserine intermediate of the active site. Positions 103, 242, 244, and 246 each coordinate Mg(2+). Serine 103 is modified (phosphoserine).

This sequence belongs to the phosphohexose mutase family. It depends on Mg(2+) as a cofactor. Post-translationally, activated by phosphorylation.

It catalyses the reaction alpha-D-glucosamine 1-phosphate = D-glucosamine 6-phosphate. In terms of biological role, catalyzes the conversion of glucosamine-6-phosphate to glucosamine-1-phosphate. This is Phosphoglucosamine mutase from Marinobacter nauticus (strain ATCC 700491 / DSM 11845 / VT8) (Marinobacter aquaeolei).